The primary structure comprises 267 residues: Tryptophan synthase alpha chain (267 aa).

Catalysis depends on proton acceptor residues Glu44 and Asp55.

It belongs to the TrpA family. As to quaternary structure, tetramer of two alpha and two beta chains.

The enzyme catalyses (1S,2R)-1-C-(indol-3-yl)glycerol 3-phosphate + L-serine = D-glyceraldehyde 3-phosphate + L-tryptophan + H2O. Its pathway is amino-acid biosynthesis; L-tryptophan biosynthesis; L-tryptophan from chorismate: step 5/5. Its function is as follows. The alpha subunit is responsible for the aldol cleavage of indoleglycerol phosphate to indole and glyceraldehyde 3-phosphate. This is Tryptophan synthase alpha chain from Coxiella burnetii (strain Dugway 5J108-111).